The chain runs to 100 residues: Large ribosomal subunit protein uL23 (100 aa).

It belongs to the universal ribosomal protein uL23 family. In terms of assembly, part of the 50S ribosomal subunit. Contacts protein L29, and trigger factor when it is bound to the ribosome.

In terms of biological role, one of the early assembly proteins it binds 23S rRNA. One of the proteins that surrounds the polypeptide exit tunnel on the outside of the ribosome. Forms the main docking site for trigger factor binding to the ribosome. In Dechloromonas aromatica (strain RCB), this protein is Large ribosomal subunit protein uL23.